The following is a 2282-amino-acid chain: Protein Ycf2 (2282 aa).

1635-1642 (GSIGTGRS) contributes to the ATP binding site.

Belongs to the Ycf2 family.

Its subcellular location is the plastid. The protein localises to the chloroplast stroma. Its function is as follows. Probable ATPase of unknown function. Its presence in a non-photosynthetic plant (Epifagus virginiana) and experiments in tobacco indicate that it has an essential function which is probably not related to photosynthesis. The chain is Protein Ycf2 from Populus alba (White poplar).